Consider the following 222-residue polypeptide: Small ribosomal subunit protein eS1 (222 aa).

Belongs to the eukaryotic ribosomal protein eS1 family.

This is Small ribosomal subunit protein eS1 from Pyrobaculum neutrophilum (strain DSM 2338 / JCM 9278 / NBRC 100436 / V24Sta) (Thermoproteus neutrophilus).